The sequence spans 359 residues: tRNA/tmRNA (uracil-C(5))-methyltransferase (359 aa).

S-adenosyl-L-methionine contacts are provided by Gln-183, Tyr-211, Asn-216, Glu-232, and Asp-292. The active-site Nucleophile is Cys-317. Catalysis depends on Glu-351, which acts as the Proton acceptor.

Belongs to the class I-like SAM-binding methyltransferase superfamily. RNA M5U methyltransferase family. TrmA subfamily.

It catalyses the reaction uridine(54) in tRNA + S-adenosyl-L-methionine = 5-methyluridine(54) in tRNA + S-adenosyl-L-homocysteine + H(+). It carries out the reaction uridine(341) in tmRNA + S-adenosyl-L-methionine = 5-methyluridine(341) in tmRNA + S-adenosyl-L-homocysteine + H(+). Its function is as follows. Dual-specificity methyltransferase that catalyzes the formation of 5-methyluridine at position 54 (m5U54) in all tRNAs, and that of position 341 (m5U341) in tmRNA (transfer-mRNA). This is tRNA/tmRNA (uracil-C(5))-methyltransferase from Pseudomonas fluorescens (strain Pf0-1).